Consider the following 594-residue polypeptide: DNA mismatch repair protein MutL (594 aa).

Belongs to the DNA mismatch repair MutL/HexB family.

Its function is as follows. This protein is involved in the repair of mismatches in DNA. It is required for dam-dependent methyl-directed DNA mismatch repair. May act as a 'molecular matchmaker', a protein that promotes the formation of a stable complex between two or more DNA-binding proteins in an ATP-dependent manner without itself being part of a final effector complex. The protein is DNA mismatch repair protein MutL of Rhizorhabdus wittichii (strain DSM 6014 / CCUG 31198 / JCM 15750 / NBRC 105917 / EY 4224 / RW1) (Sphingomonas wittichii).